Reading from the N-terminus, the 130-residue chain is Small ribosomal subunit protein uS8 (130 aa).

It belongs to the universal ribosomal protein uS8 family. In terms of assembly, part of the 30S ribosomal subunit. Contacts proteins S5 and S12.

Functionally, one of the primary rRNA binding proteins, it binds directly to 16S rRNA central domain where it helps coordinate assembly of the platform of the 30S subunit. The chain is Small ribosomal subunit protein uS8 from Chromohalobacter salexigens (strain ATCC BAA-138 / DSM 3043 / CIP 106854 / NCIMB 13768 / 1H11).